We begin with the raw amino-acid sequence, 480 residues long: Initiation-specific alpha-1,6-mannosyltransferase (480 aa).

Over 1 to 15 (MSRKLSHLIATRKSK) the chain is Cytoplasmic. Residues 16-30 (TIVVTVLLIYSLLTF) form a helical; Signal-anchor for type II membrane protein membrane-spanning segment. Residues 31 to 480 (HLSNKRLLSQ…EDADKNAGHK (450 aa)) are Lumenal-facing. The short motif at 187–189 (DMD) is the DXD motif element. Asparagine 203, asparagine 281, asparagine 341, and asparagine 393 each carry an N-linked (GlcNAc...) asparagine glycan.

Belongs to the glycosyltransferase 32 family. Mn(2+) is required as a cofactor. Glycosylated.

It is found in the endoplasmic reticulum membrane. The protein localises to the golgi apparatus membrane. The catalysed reaction is Transfers an alpha-D-mannosyl residue from GDP-mannose into lipid-linked oligosaccharide, forming an alpha-(1-&gt;6)-D-mannosyl-D-mannose linkage.. In terms of biological role, mannosyltransferase involved in outer chain elongation of asparagine-linked oligosaccharides of the type Man(9)GlcNAc(2). Adds the first alpha-1,6-mannose to the Man(8)GlcNAc(2) and Man(9)GlcNAc(2), but not Man(5)GlcNAc(2), endoplasmic reticulum intermediates. Represents the first enzymatic event required for synthesis of outer chain mannose linkages on yeast secretory proteins. Also has the potential to transfer a second alpha-1,6-mannose to the Man(8)GlcNAc(2) core oligosaccharide. This Saccharomyces cerevisiae (strain ATCC 204508 / S288c) (Baker's yeast) protein is Initiation-specific alpha-1,6-mannosyltransferase.